We begin with the raw amino-acid sequence, 265 residues long: 3-methyl-2-oxobutanoate hydroxymethyltransferase (265 aa).

2 residues coordinate Mg(2+): D44 and D83. 3-methyl-2-oxobutanoate-binding positions include 44–45 (DS), D83, and K113. E115 provides a ligand contact to Mg(2+). The Proton acceptor role is filled by E183.

Belongs to the PanB family. As to quaternary structure, homodecamer; pentamer of dimers. Mg(2+) serves as cofactor.

It is found in the cytoplasm. It carries out the reaction 3-methyl-2-oxobutanoate + (6R)-5,10-methylene-5,6,7,8-tetrahydrofolate + H2O = 2-dehydropantoate + (6S)-5,6,7,8-tetrahydrofolate. The protein operates within cofactor biosynthesis; (R)-pantothenate biosynthesis; (R)-pantoate from 3-methyl-2-oxobutanoate: step 1/2. Its function is as follows. Catalyzes the reversible reaction in which hydroxymethyl group from 5,10-methylenetetrahydrofolate is transferred onto alpha-ketoisovalerate to form ketopantoate. This is 3-methyl-2-oxobutanoate hydroxymethyltransferase from Leptospira borgpetersenii serovar Hardjo-bovis (strain L550).